Here is a 151-residue protein sequence, read N- to C-terminus: Nucleoside diphosphate kinase (151 aa).

Lys10, Phe58, Arg86, Thr92, Arg103, and Asn113 together coordinate ATP. Catalysis depends on His116, which acts as the Pros-phosphohistidine intermediate.

Belongs to the NDK family. In terms of assembly, homotetramer. It depends on Mg(2+) as a cofactor.

Its subcellular location is the cytoplasm. It carries out the reaction dZDP + ATP = dZTP + ADP. It catalyses the reaction a 2'-deoxyribonucleoside 5'-diphosphate + ATP = a 2'-deoxyribonucleoside 5'-triphosphate + ADP. The catalysed reaction is a ribonucleoside 5'-diphosphate + ATP = a ribonucleoside 5'-triphosphate + ADP. It functions in the pathway purine metabolism. Functionally, major role in the synthesis of nucleoside triphosphates other than ATP. The ATP gamma phosphate is transferred to the NDP beta phosphate via a ping-pong mechanism, using a phosphorylated active-site intermediate. Its function is as follows. (Microbial infection) Catalyzes the phosphorylation of dZDP to dZTP, when the bacterium is infected by a phage that produces the substrate for the synthesis of dZTP (2- amino-2'-deoxyadenosine 5'-triphosphate), which is then used by the phage as a DNA polymerase substrate. The protein is Nucleoside diphosphate kinase of Synechococcus sp. (strain CC9902).